The sequence spans 76 residues: MATFDDVKDVIVDKLGVDGDKVMPEARFVEDLGADSLETVELIMGLEDKFGITISDEDAENIRTVQAAIDYIESKQ.

A Carrier domain is found at 1–76; that stretch reads MATFDDVKDV…AAIDYIESKQ (76 aa). S36 bears the O-(pantetheine 4'-phosphoryl)serine mark.

The protein belongs to the acyl carrier protein (ACP) family. Post-translationally, 4'-phosphopantetheine is transferred from CoA to a specific serine of apo-ACP by AcpS. This modification is essential for activity because fatty acids are bound in thioester linkage to the sulfhydryl of the prosthetic group.

Its subcellular location is the cytoplasm. Its pathway is lipid metabolism; fatty acid biosynthesis. Functionally, carrier of the growing fatty acid chain in fatty acid biosynthesis. The polypeptide is Acyl carrier protein (Deinococcus deserti (strain DSM 17065 / CIP 109153 / LMG 22923 / VCD115)).